The primary structure comprises 218 residues: Adenylate kinase (218 aa).

Residue 10-15 (GAGKGT) participates in ATP binding. Positions 30–59 (STGDMLRAAIQAQTPLGLEAKKVMDDGKLV) are NMP. Residues T31, R36, 57–59 (KLV), 85–88 (GFPR), and Q92 each bind AMP. Residues 122–159 (GRRVHLASGRTYHVIFNPPKKEGVDDITGEPLIQREDD) form an LID region. ATP is bound by residues R123 and 132 to 133 (TY). AMP contacts are provided by R156 and R167. G203 lines the ATP pocket.

The protein belongs to the adenylate kinase family. As to quaternary structure, monomer.

It is found in the cytoplasm. The enzyme catalyses AMP + ATP = 2 ADP. It functions in the pathway purine metabolism; AMP biosynthesis via salvage pathway; AMP from ADP: step 1/1. Functionally, catalyzes the reversible transfer of the terminal phosphate group between ATP and AMP. Plays an important role in cellular energy homeostasis and in adenine nucleotide metabolism. This is Adenylate kinase from Prosthecochloris aestuarii (strain DSM 271 / SK 413).